We begin with the raw amino-acid sequence, 87 residues long: Serine protease inhibitor Kazal-type 12 (87 aa).

Positions 1–22 are cleaved as a signal peptide; it reads MKPAGAFLLLISLACLFLSVDA. The Kazal-like domain maps to 26-87; the sequence is GGFQAFCSNY…KLGFKHEGKC (62 aa). 3 cysteine pairs are disulfide-bonded: cysteine 32–cysteine 68, cysteine 46–cysteine 65, and cysteine 54–cysteine 87.

Expressed in epydiymis, in the caput.

It localises to the secreted. Inhibits trypsin. The sequence is that of Serine protease inhibitor Kazal-type 12 (Spink12) from Mus musculus (Mouse).